We begin with the raw amino-acid sequence, 276 residues long: Large ribosomal subunit protein uL2 (276 aa).

Residues Thr-219 to Lys-268 form a disordered region.

The protein belongs to the universal ribosomal protein uL2 family. In terms of assembly, part of the 50S ribosomal subunit. Forms a bridge to the 30S subunit in the 70S ribosome.

One of the primary rRNA binding proteins. Required for association of the 30S and 50S subunits to form the 70S ribosome, for tRNA binding and peptide bond formation. It has been suggested to have peptidyltransferase activity; this is somewhat controversial. Makes several contacts with the 16S rRNA in the 70S ribosome. In Lactococcus lactis subsp. lactis (strain IL1403) (Streptococcus lactis), this protein is Large ribosomal subunit protein uL2.